The sequence spans 107 residues: Large ribosomal subunit protein uL24 (107 aa).

It belongs to the universal ribosomal protein uL24 family. As to quaternary structure, part of the 50S ribosomal subunit.

Functionally, one of two assembly initiator proteins, it binds directly to the 5'-end of the 23S rRNA, where it nucleates assembly of the 50S subunit. One of the proteins that surrounds the polypeptide exit tunnel on the outside of the subunit. The sequence is that of Large ribosomal subunit protein uL24 from Natranaerobius thermophilus (strain ATCC BAA-1301 / DSM 18059 / JW/NM-WN-LF).